The sequence spans 508 residues: BICD family-like cargo adapter 2 (508 aa).

The segment covering 1–22 has biased composition (low complexity); that stretch reads MSSPDGPSFPSGPLSGGASPSG. Disordered regions lie at residues 1–27, 132–152, and 300–351; these read MSSPDGPSFPSGPLSGGASPSGDEGFF, LGEQRSEQQDSGRERARALSE, and AHSL…TSLS. Coiled-coil stretches lie at residues 64-300 and 353-458; these read AAEL…SELA and AEIL…DMQV. Positions 135 to 149 are enriched in basic and acidic residues; sequence QRSEQQDSGRERARA. A disordered region spans residues 470-491; sequence KELSASASSSTPRRAAPRFSLR. Low complexity predominate over residues 473-489; it reads SASASSSTPRRAAPRFS.

Belongs to the BICDR family. In terms of assembly, interacts with RAB13.

This Homo sapiens (Human) protein is BICD family-like cargo adapter 2 (BICDL2).